The chain runs to 314 residues: MLRIYAPASSANISVGFDTLGAAISPIDGSLLGDVVQIESISTGFELESAGYFVRKLPKEPQKNIVYQAYVLFSEQLKLRGANVKPLRLTLEKNMPIGSGLGSSACSIVAALVALNQFHNEPFSKMELLEMMGELEGRISGSIHYDNVAPCYLGGVQFMVQSLGNICQKLPFFDNWYWVLAYPGIEVSTAEARAILPKSYTRQNVIAHGRHLGGFVHACHTHQENLAAIMMKDVIAEPYRESLLPNFAEVKQATRDLGALATGISGSGPTIFSIAPDLQTAIKLSSYLESHYLQNNEGFVHVCKVDNEGTREIK.

Residue 96–106 participates in ATP binding; it reads PIGSGLGSSAC.

The protein belongs to the GHMP kinase family. Homoserine kinase subfamily.

It is found in the cytoplasm. The enzyme catalyses L-homoserine + ATP = O-phospho-L-homoserine + ADP + H(+). It participates in amino-acid biosynthesis; L-threonine biosynthesis; L-threonine from L-aspartate: step 4/5. Functionally, catalyzes the ATP-dependent phosphorylation of L-homoserine to L-homoserine phosphate. The polypeptide is Homoserine kinase (Haemophilus influenzae (strain PittEE)).